A 152-amino-acid chain; its full sequence is Large ribosomal subunit protein bL9 (152 aa).

This sequence belongs to the bacterial ribosomal protein bL9 family.

Its function is as follows. Binds to the 23S rRNA. The sequence is that of Large ribosomal subunit protein bL9 from Parasynechococcus marenigrum (strain WH8102).